The following is a 540-amino-acid chain: Putative serine protease F56F10.1 (540 aa).

The first 16 residues, Met-1 to Ala-16, serve as a signal peptide directing secretion. Asn-58 and Asn-87 each carry an N-linked (GlcNAc...) asparagine glycan. Ser-182 acts as the Charge relay system in catalysis. N-linked (GlcNAc...) asparagine glycans are attached at residues Asn-270, Asn-300, Asn-317, Asn-343, Asn-441, and Asn-449. Catalysis depends on Asp-453, which acts as the Charge relay system. N-linked (GlcNAc...) asparagine glycosylation occurs at Asn-475. The active-site Charge relay system is His-479.

Belongs to the peptidase S28 family.

The chain is Putative serine protease F56F10.1 from Caenorhabditis elegans.